The primary structure comprises 300 residues: GTPase Era (300 aa).

In terms of domain architecture, Era-type G spans 6-173 (KSGFVAIVGR…MDVLVEQMPE (168 aa)). Residues 14–21 (GRPNVGKS) form a G1 region. 14 to 21 (GRPNVGKS) lines the GTP pocket. The G2 stretch occupies residues 40-44 (QTTRN). Residues 61–64 (DTPG) are G3. GTP contacts are provided by residues 61-65 (DTPGI) and 123-126 (NKID). The interval 123–126 (NKID) is G4. The segment at 152-154 (ISA) is G5. The KH type-2 domain maps to 204–281 (TRDEIPHSVA…YLELWVKVQK (78 aa)).

This sequence belongs to the TRAFAC class TrmE-Era-EngA-EngB-Septin-like GTPase superfamily. Era GTPase family. Monomer.

It localises to the cytoplasm. Its subcellular location is the cell membrane. Functionally, an essential GTPase that binds both GDP and GTP, with rapid nucleotide exchange. Plays a role in 16S rRNA processing and 30S ribosomal subunit biogenesis and possibly also in cell cycle regulation and energy metabolism. The chain is GTPase Era from Enterococcus faecalis (strain ATCC 700802 / V583).